The chain runs to 1085 residues: SLIT-ROBO Rho GTPase-activating protein 1 (1085 aa).

The 296-residue stretch at S19–D314 folds into the F-BAR domain. Residues V351 to M390 adopt a coiled-coil conformation. S416 is subject to Phosphoserine. The interval Y475–R496 is disordered. Positions G506 to F694 constitute a Rho-GAP domain. In terms of domain architecture, SH3 spans C743–M802. The segment covering D808–P822 has biased composition (polar residues). Residues D808–D954 form a disordered region. 2 positions are modified to phosphoserine: S835 and S917. The segment covering S922–D931 has biased composition (basic and acidic residues). S932 carries the post-translational modification Phosphoserine. Residues R937–G946 show a composition bias toward polar residues. A coiled-coil region spans residues E956–A985. Positions K997–P1011 are enriched in polar residues. Disordered regions lie at residues K997–F1038 and K1051–M1085. Phosphoserine is present on S999. Phosphothreonine is present on T1001. Over residues S1027–T1037 the composition is skewed to low complexity. Position 1032 is a phosphoserine (S1032).

Homodimer. Forms a heterooligomer with SRGAP2 and SRGAP3 through its F-BAR domain. Interacts with ROBO1, CDC42 and RHOA. Interacts with FASLG. In terms of tissue distribution, expressed in brain, lung, kidney, and testis.

GTPase-activating protein for RhoA and Cdc42 small GTPases. Together with CDC42 seems to be involved in the pathway mediating the repulsive signaling of Robo and Slit proteins in neuronal migration. SLIT2, probably through interaction with ROBO1, increases the interaction of SRGAP1 with ROBO1 and inactivates CDC42. In Homo sapiens (Human), this protein is SLIT-ROBO Rho GTPase-activating protein 1 (SRGAP1).